Consider the following 575-residue polypeptide: Proline--tRNA ligase, cytoplasmic (575 aa).

This sequence belongs to the class-II aminoacyl-tRNA synthetase family.

It localises to the cytoplasm. It catalyses the reaction tRNA(Pro) + L-proline + ATP = L-prolyl-tRNA(Pro) + AMP + diphosphate. The chain is Proline--tRNA ligase, cytoplasmic (PRS) from Candida albicans (Yeast).